We begin with the raw amino-acid sequence, 675 residues long: Parasporal crystal protein Cry18Ba (675 aa).

This sequence belongs to the delta endotoxin family.

Its function is as follows. Binds to the brush border membrane vesicles of scarab larvae and damages the gut wall somehow to allow the vegetative cells of P.popilliae to enter the hemolymph. The protein is Parasporal crystal protein Cry18Ba (cry18Ba) of Paenibacillus popilliae (Bacillus popilliae).